Consider the following 764-residue polypeptide: ATP-dependent DNA helicase DDM1 (764 aa).

A disordered region spans residues 1–42 (MVSLRSRKVIPASEMVSDGKTEKDASGDSPTSVLNEEENCEE). Positions 17 to 26 (SDGKTEKDAS) are enriched in basic and acidic residues. The stretch at 62–88 (LISEAMAQEEEQLLKLREDEEKANNAG) forms a coiled coil. The tract at residues 129–152 (IESESQKAEPEKTGRGRKRKAASQ) is disordered. The span at 132-142 (ESQKAEPEKTG) shows a compositional bias: basic and acidic residues. The short motif at 145 to 152 (RKRKAASQ) is the Nuclear localization signal 1 element. Residues 214-382 (ISLWQNGLNG…WSLLNFILPD (169 aa)) form the Helicase ATP-binding domain. 227 to 234 (DQMGLGKT) is an ATP binding site. The DEAH box motif lies at 333-336 (DEGH). The short motif at 429–436 (LRRMKCDV) is the Nuclear localization signal 2 element. Residues 528–695 (LLERLLVRLF…STPLEEEDIL (168 aa)) form the Helicase C-terminal domain.

It belongs to the SNF2/RAD54 helicase family. In terms of assembly, interacts with the MBD domains of MBD2, MBD5 and MBD6.

The protein resides in the nucleus. It carries out the reaction ATP + H2O = ADP + phosphate + H(+). With respect to regulation, ATPase activity is stimulated 3-fold by DNA (both free and nucleosomal) binding. In terms of biological role, ATP-dependent DNA helicase that plays a role in formation, organization, stability and heritability of heterochromatin and thus regulates several physiological traits. Binds to the nucleosome and promotes chromatin remodeling in an ATP-dependent manner; induces nucleosome repositioning on a short DNA fragment, and, possibly, could be guided to target sites (including silent transposable elements) by small interfering RNAs (siRNAs). Can bind both free and nucleosomal DNA. Required for the heritable maintenance of genome integrity and transcriptional gene silencing (TGS), including homology-dependent gene silencing (HDG silencing), via the maintenance of DNA methylation (mostly on cytosine, in both CpG and CpHpG sites, where H is A, T or C) and of histone methylation (e.g. chromatin methylation). May facilitate localization of MBD proteins at specific nuclear domains. Necessary for the maintenance of the genomic imprint at the MEA locus, especially for the silencing of paternally inherited MEA locus. Plays a major role in the inactivation maintenance of retrotransposons (e.g. Tar17, SINE, LINE, ATLN39, CAC1 (CACTAs), Athila elements, and mutator-like elements MULEs and TIR-MULEs) and the silencing of repeated genes and transgenes (e.g. T-DNA insertions). Required for KYP-dependent histone H3 'Lys-9' (H3K9me) methylation, deacetylation of histone H4 'Lys-16' (H4K16) and MET1-dependent DNA methylation. Involved in the chromatin organization of 5S rRNA genes (localized in the pericentromeric heterochromatin of chromosomes 3, 4, and 5) modifications during heterochromatin establishment. Prevents siRNA accumulation (siRNA are probably involved in epigenetic inheritance and in 5S rRNA genes regulation by silencing). Required during plant organogenesis and development, as well as during seed formation. This chain is ATP-dependent DNA helicase DDM1 (DDM1), found in Arabidopsis thaliana (Mouse-ear cress).